The following is a 283-amino-acid chain: Succinate dehydrogenase [ubiquinone] iron-sulfur subunit, mitochondrial (283 aa).

The 80-residue stretch at 66-145 (KKPTLQTYSI…PVKIYPLPHM (80 aa)) folds into the 2Fe-2S ferredoxin-type domain. [2Fe-2S] cluster is bound by residues Cys105, Cys110, Cys113, and Cys125. The 4Fe-4S ferredoxin-type domain occupies 186–216 (DRKKLDGMYECILCACCSTSCPSYWWNQDEY). [4Fe-4S] cluster is bound by residues Cys196, Cys199, and Cys202. [3Fe-4S] cluster is bound at residue Cys206. Trp211 serves as a coordination point for a ubiquinone. Residues Cys253 and Cys259 each coordinate [3Fe-4S] cluster. Cys263 is a binding site for [4Fe-4S] cluster.

This sequence belongs to the succinate dehydrogenase/fumarate reductase iron-sulfur protein family. Component of complex II composed of four subunits: a flavoprotein (FP), an iron-sulfur protein (IP), and a cytochrome b composed of a large and a small subunit. [2Fe-2S] cluster serves as cofactor. It depends on [3Fe-4S] cluster as a cofactor. [4Fe-4S] cluster is required as a cofactor.

Its subcellular location is the mitochondrion inner membrane. It carries out the reaction a quinone + succinate = fumarate + a quinol. It functions in the pathway carbohydrate metabolism; tricarboxylic acid cycle; fumarate from succinate (eukaryal route): step 1/1. Iron-sulfur protein (IP) subunit of succinate dehydrogenase (SDH) that is involved in complex II of the mitochondrial electron transport chain and is responsible for transferring electrons from succinate to ubiquinone (coenzyme Q). The chain is Succinate dehydrogenase [ubiquinone] iron-sulfur subunit, mitochondrial (SDH2) from Uromyces fabae (Rust fungus).